A 466-amino-acid chain; its full sequence is Chromogranin-A (466 aa).

An N-terminal signal peptide occupies residues 1-18 (MRSSAALALLLCAGQVFA). A disulfide bridge links Cys35 with Cys56. The tract at residues 91–443 (AQQQQQQQQQ…ANRRAEDQEL (353 aa)) is disordered. A compositionally biased stretch (low complexity) spans 92–111 (QQQQQQQQQQQQQQQQQQQQ). Position 114 is a phosphoserine (Ser114). A compositionally biased stretch (basic and acidic residues) spans 131-155 (KHGDAASEAPSKDTVEKREDSDKGQ). Over residues 177–213 (ESSMMGNSQSPGEDTANNTQSPTSLPSQEHGIPQTTE) the composition is skewed to polar residues. Position 215 is a phosphoserine (Ser215). The segment covering 233–247 (KEEEEEEKEEEEEEK) has biased composition (acidic residues). Basic and acidic residues predominate over residues 248–259 (EEKAIAREKAGP). A phosphoserine mark is found at Ser288 and Ser312. A compositionally biased stretch (basic and acidic residues) spans 305-314 (GKGELEHSQQ). Gly332 carries the post-translational modification Glycine amide. The span at 351–378 (RLSREWEDKRWSRMDQLAKELTAEKRLE) shows a compositional bias: basic and acidic residues. 2 positions are modified to phosphoserine: Ser353 and Ser386. The residue at position 387 (Met387) is a Methionine sulfoxide. The span at 412-440 (SSREDSVEARGDFEEKKEEEGSANRRAED) shows a compositional bias: basic and acidic residues. A phosphoserine mark is found at Ser413, Ser417, and Ser433. Residue Ser433 is glycosylated (O-linked (Xyl...) (chondroitin sulfate) serine). At Gln441 the chain carries Pyrrolidone carboxylic acid. Phosphoserine is present on Ser447.

It belongs to the chromogranin/secretogranin protein family. In terms of assembly, self-interacts; self-assembly is promoted in vitro by chondroitin sulfate attachment which occurs at mildly acidic pH conditions. Interacts with SCG3; this interaction is optimal in conditions mimicking the lumenal milieu of the trans-Golgi network, i.e. pH 5.5 and 10 mM Ca(+2). Interacts with ITPR1 in the secretory granules. In terms of processing, O-glycosylated; contains chondroitin sulfate (CS). CS attachment is pH-dependent, being observed at mildly acidic conditions of pH 5 but not at neutral pH, and promotes self-assembly in vitro. Expressed in the brain and adrenal and pituitary glands.

Its subcellular location is the cytoplasmic vesicle. The protein resides in the secretory vesicle. The protein localises to the neuronal dense core vesicle. It is found in the secreted. Functionally, strongly inhibits glucose induced insulin release from the pancreas. In terms of biological role, catestatin inhibits catecholamine release from chromaffin cells and noradrenergic neurons by acting as a non-competitive nicotinic cholinergic antagonist. Can induce mast cell migration, degranulation and production of cytokines and chemokines. Its function is as follows. Serpinin regulates granule biogenesis in endocrine cells by up-regulating the transcription of protease nexin 1 (SERPINE2) via a cAMP-PKA-SP1 pathway. This leads to inhibition of granule protein degradation in the Golgi complex which in turn promotes granule formation. Serpinin and pGlu-serpinin can enhance both myocardial contractility (inotropy) and relaxation (lusitropy) and this cardio-stimulation requires a beta 1-adrenergic receptor/adenylate cyclase/cAMP/PKA pathway. The polypeptide is Chromogranin-A (Chga) (Rattus norvegicus (Rat)).